The primary structure comprises 98 residues: NADH-ubiquinone oxidoreductase chain 4L (98 aa).

Helical transmembrane passes span 1–21, 29–49, and 61–81; these read MSLT…GLLM, SLLC…ITIL, and IILL…LVMV.

This sequence belongs to the complex I subunit 4L family. Core subunit of respiratory chain NADH dehydrogenase (Complex I) which is composed of 45 different subunits.

Its subcellular location is the mitochondrion inner membrane. The enzyme catalyses a ubiquinone + NADH + 5 H(+)(in) = a ubiquinol + NAD(+) + 4 H(+)(out). Its function is as follows. Core subunit of the mitochondrial membrane respiratory chain NADH dehydrogenase (Complex I) which catalyzes electron transfer from NADH through the respiratory chain, using ubiquinone as an electron acceptor. Part of the enzyme membrane arm which is embedded in the lipid bilayer and involved in proton translocation. This is NADH-ubiquinone oxidoreductase chain 4L (MT-ND4L) from Artibeus jamaicensis (Jamaican fruit-eating bat).